Consider the following 93-residue polypeptide: DNA-binding protein HB1 (93 aa).

The protein belongs to the bacterial histone-like protein family. Homodimer.

Histone-like DNA-binding protein which is capable of wrapping DNA to stabilize it, and thus to prevent its denaturation under extreme environmental conditions. The chain is DNA-binding protein HB1 (hup) from Bifidobacterium longum (strain NCC 2705).